The primary structure comprises 233 residues: tRNA (guanine-N(7)-)-methyltransferase (233 aa).

Residues E62, E87, D116, and D138 each coordinate S-adenosyl-L-methionine. D138 is an active-site residue. Substrate is bound by residues K142, D174, and 212 to 215; that span reads TRYE.

Belongs to the class I-like SAM-binding methyltransferase superfamily. TrmB family.

It catalyses the reaction guanosine(46) in tRNA + S-adenosyl-L-methionine = N(7)-methylguanosine(46) in tRNA + S-adenosyl-L-homocysteine. It participates in tRNA modification; N(7)-methylguanine-tRNA biosynthesis. Catalyzes the formation of N(7)-methylguanine at position 46 (m7G46) in tRNA. The protein is tRNA (guanine-N(7)-)-methyltransferase of Bartonella quintana (strain Toulouse) (Rochalimaea quintana).